An 89-amino-acid chain; its full sequence is Small ribosomal subunit protein uS15 (89 aa).

The protein belongs to the universal ribosomal protein uS15 family. As to quaternary structure, part of the 30S ribosomal subunit. Forms a bridge to the 50S subunit in the 70S ribosome, contacting the 23S rRNA.

Its function is as follows. One of the primary rRNA binding proteins, it binds directly to 16S rRNA where it helps nucleate assembly of the platform of the 30S subunit by binding and bridging several RNA helices of the 16S rRNA. Functionally, forms an intersubunit bridge (bridge B4) with the 23S rRNA of the 50S subunit in the ribosome. This Coxiella burnetii (strain CbuK_Q154) (Coxiella burnetii (strain Q154)) protein is Small ribosomal subunit protein uS15.